Consider the following 420-residue polypeptide: MTMIFDKGNVEDFDKELWDAIHAEEERQEHHIELIASENMVSKAVMAAQGSVLTNKYAEGYPGNRYYGGTECVDIVETLAIERAKKLFGAAFANVQAHSGSQANAAAYMALIEAGDTVLGMDLAAGGHLTHGSPVNFSGKTYHFVGYSVDADTEMLNYEAILEQAKAVQPKLIVAGASAYSRSIDFEKFRAIADHVGAYLMVDMAHIAGLVAAGVHPSPVHYAHIVTSTTHKTLRGPRGGLILTNDEALAKKINSAVFPGLQGGPLEHVIAAKAVAFKEALDPAFKDYAQAIIDNTAAMAAVFAQDDRFRLISGGTDNHVFLVDVTKVIANGKLAQNLLDEVNITLNKNAIPFETLSPFKTSGIRIGCAAITSRGMGVKESQTIAHLIIKALVNHDQETILEEVRQEVRQLTDAFPLYKK.

(6S)-5,6,7,8-tetrahydrofolate contacts are provided by residues Leu-123 and Gly-127 to Leu-129. Lys-232 carries the N6-(pyridoxal phosphate)lysine modification. Residue Ser-357–Phe-359 participates in (6S)-5,6,7,8-tetrahydrofolate binding.

This sequence belongs to the SHMT family. In terms of assembly, homodimer. The cofactor is pyridoxal 5'-phosphate.

It is found in the cytoplasm. It carries out the reaction (6R)-5,10-methylene-5,6,7,8-tetrahydrofolate + glycine + H2O = (6S)-5,6,7,8-tetrahydrofolate + L-serine. Its pathway is one-carbon metabolism; tetrahydrofolate interconversion. The protein operates within amino-acid biosynthesis; glycine biosynthesis; glycine from L-serine: step 1/1. In terms of biological role, catalyzes the reversible interconversion of serine and glycine with tetrahydrofolate (THF) serving as the one-carbon carrier. This reaction serves as the major source of one-carbon groups required for the biosynthesis of purines, thymidylate, methionine, and other important biomolecules. Also exhibits THF-independent aldolase activity toward beta-hydroxyamino acids, producing glycine and aldehydes, via a retro-aldol mechanism. This is Serine hydroxymethyltransferase from Streptococcus pyogenes serotype M12 (strain MGAS2096).